Consider the following 321-residue polypeptide: Putative glucan endo-1,3-beta-glucosidase GVI (321 aa).

Positions 1-6 (LAGVEG) are cleaved as a signal peptide. E100 (proton donor) is an active-site residue. Catalysis depends on E241, which acts as the Nucleophile.

It belongs to the glycosyl hydrolase 17 family.

It catalyses the reaction Hydrolysis of (1-&gt;3)-beta-D-glucosidic linkages in (1-&gt;3)-beta-D-glucans.. Functionally, may provide a degree of protection against microbial invasion of germinated barley grain through its ability to degrade fungal cell wall polysaccharides. This Hordeum vulgare (Barley) protein is Putative glucan endo-1,3-beta-glucosidase GVI.